The sequence spans 330 residues: Ketol-acid reductoisomerase (NADP(+)) (330 aa).

Residues 1–181 (MKVLYDDDVN…GLTRAGVIET (181 aa)) enclose the KARI N-terminal Rossmann domain. Residues 24–27 (YGSQ), Arg-47, Ser-52, and 82–85 (DEIQ) contribute to the NADP(+) site. His-107 is an active-site residue. Gly-133 serves as a coordination point for NADP(+). One can recognise a KARI C-terminal knotted domain in the interval 182-327 (TYREETETDL…KNLRIACGLQ (146 aa)). Mg(2+) is bound by residues Asp-190, Glu-194, Glu-226, and Glu-230. A substrate-binding site is contributed by Ser-251.

It belongs to the ketol-acid reductoisomerase family. Mg(2+) is required as a cofactor.

It carries out the reaction (2R)-2,3-dihydroxy-3-methylbutanoate + NADP(+) = (2S)-2-acetolactate + NADPH + H(+). The catalysed reaction is (2R,3R)-2,3-dihydroxy-3-methylpentanoate + NADP(+) = (S)-2-ethyl-2-hydroxy-3-oxobutanoate + NADPH + H(+). Its pathway is amino-acid biosynthesis; L-isoleucine biosynthesis; L-isoleucine from 2-oxobutanoate: step 2/4. The protein operates within amino-acid biosynthesis; L-valine biosynthesis; L-valine from pyruvate: step 2/4. Functionally, involved in the biosynthesis of branched-chain amino acids (BCAA). Catalyzes an alkyl-migration followed by a ketol-acid reduction of (S)-2-acetolactate (S2AL) to yield (R)-2,3-dihydroxy-isovalerate. In the isomerase reaction, S2AL is rearranged via a Mg-dependent methyl migration to produce 3-hydroxy-3-methyl-2-ketobutyrate (HMKB). In the reductase reaction, this 2-ketoacid undergoes a metal-dependent reduction by NADPH to yield (R)-2,3-dihydroxy-isovalerate. This chain is Ketol-acid reductoisomerase (NADP(+)), found in Methanosphaera stadtmanae (strain ATCC 43021 / DSM 3091 / JCM 11832 / MCB-3).